Reading from the N-terminus, the 616-residue chain is MNISRSSGLMRQFLLQPLRKGCDISCLGRSSWRMSRSFSGSSVLNEINLSRTKNLFLNDCKFNKNSFEKFFARRLSNSVAPTPGGILQETEKIPSKKVAFWLLGSSALVLAIVVVGGITRLTESGLSITEWKPITGVIPPLTDEQWNQEFELYKKSPEFEKLNSHMTVDEFKNIFFWEWFHRVLGRGIGLTILLPSIYMIVTKRASPWLSKRLIGLTGLVGLQGVIGWWMVKSGLSEELFSDGSHPRVSHYRLATHLAAAVALYIGLVWTGHGILQRHAFLKSMKSGSTSQLTSMVSSVQKMKGFRTSVNSFVGLVLITLLSGAFVAGLDAGMIYCTFPEMGEGRLAPSKSELFDQRFCRKDDKSDLIWRNMIDNPSLVQLEHRILAITTFVAACGLFIFSRAKRNILPKKIKTSINVVTGVVTAQATLGIMTLIYVVPVPLAALHQAGSLVTLTAALSLAQRLHPEYALKNIRSWTKLISSPPKSSISSSILTQQRQFHTFRPSFHSEIKKPLPGTGIKVFFVTPEGREIMIEGNEEGACEGSVACSTCHVIVDPEHYELLDPPEEDEEDMLDLAFGLEETSRLGCQVLLRKDLDGIRVRIPAQTRNIRLERPKA.

A mitochondrion-targeting transit peptide spans 1–45 (MNISRSSGLMRQFLLQPLRKGCDISCLGRSSWRMSRSFSGSSVLN). Positions 45–465 (NEINLSRTKN…AALSLAQRLH (421 aa)) are heme a synthase cox15-like. Residues 46–97 (EINLSRTKNLFLNDCKFNKNSFEKFFARRLSNSVAPTPGGILQETEKIPSKK) lie on the Mitochondrial matrix side of the membrane. A helical membrane pass occupies residues 98 to 118 (VAFWLLGSSALVLAIVVVGGI). Over 119–182 (TRLTESGLSI…NIFFWEWFHR (64 aa)) the chain is Mitochondrial intermembrane. Residue histidine 181 participates in heme o binding. Residues 183–203 (VLGRGIGLTILLPSIYMIVTK) traverse the membrane as a helical segment. The Mitochondrial matrix portion of the chain corresponds to 204–212 (RASPWLSKR). Residues 213–233 (LIGLTGLVGLQGVIGWWMVKS) form a helical membrane-spanning segment. The Mitochondrial intermembrane segment spans residues 234-254 (GLSEELFSDGSHPRVSHYRLA). A helical transmembrane segment spans residues 255 to 275 (THLAAAVALYIGLVWTGHGIL). Position 256 (histidine 256) interacts with heme o. Topologically, residues 276–311 (QRHAFLKSMKSGSTSQLTSMVSSVQKMKGFRTSVNS) are mitochondrial matrix. A helical transmembrane segment spans residues 312 to 332 (FVGLVLITLLSGAFVAGLDAG). Topologically, residues 333–380 (MIYCTFPEMGEGRLAPSKSELFDQRFCRKDDKSDLIWRNMIDNPSLVQ) are mitochondrial intermembrane. The helical transmembrane segment at 381 to 401 (LEHRILAITTFVAACGLFIFS) threads the bilayer. Residue histidine 383 coordinates heme b. At 402-417 (RAKRNILPKKIKTSIN) the chain is on the mitochondrial matrix side. The helical transmembrane segment at 418–438 (VVTGVVTAQATLGIMTLIYVV) threads the bilayer. Residue proline 439 is a topological domain, mitochondrial intermembrane. A helical membrane pass occupies residues 440–460 (VPLAALHQAGSLVTLTAALSL). Heme b is bound at residue histidine 446. At 461–616 (AQRLHPEYAL…RNIRLERPKA (156 aa)) the chain is on the mitochondrial matrix side. The 2Fe-2S ferredoxin-type domain occupies 502-606 (FRPSFHSEIK…GIRVRIPAQT (105 aa)). The mitochondrial ferredoxin yah1-like stretch occupies residues 516–616 (GTGIKVFFVT…RNIRLERPKA (101 aa)). Residues cysteine 541, cysteine 547, cysteine 550, and cysteine 587 each contribute to the [2Fe-2S] cluster site.

In the N-terminal section; belongs to the COX15/CtaA family. Type 2 subfamily. It in the C-terminal section; belongs to the adrenodoxin/putidaredoxin family. Homodimer. Heme b is required as a cofactor. The cofactor is [2Fe-2S] cluster. The etp1 preprotein is cleaved into 2 chains after imort into mitochondria. The N-terminal chain containing a heme A synthase cox15-like domain etp1(cd) is a subunit of the membrane-embedded cytochrome c oxidase complex and functions in the respiratory chain. The C-terminal chain containing a ferredoxin yah1-like domain etp1(fd) is released and serves in the matrix as electron transfer protein.

It is found in the mitochondrion inner membrane. It localises to the mitochondrion matrix. The catalysed reaction is Fe(II)-heme o + 2 A + H2O = Fe(II)-heme a + 2 AH2. The protein operates within porphyrin-containing compound metabolism; heme A biosynthesis; heme A from heme O: step 1/1. Its function is as follows. Catalyzes the second reaction in the biosynthesis of heme A, a prosthetic group of mitochondrial cytochrome c oxidase (CcO). Heme A is synthesized from heme B by two sequential enzymatic reactions catalyzed by heme O synthase (HOS) and heme A synthase (HAS). HAS catalyzes the conversion of heme O to heme A by two successive hydroxylations of the methyl group at C8, in a reaction that involves matrix ferredoxin and ferredoxin reductase. The first hydroxylation forms heme I, the second hydroxylation results in an unstable dihydroxymethyl group, which spontaneously dehydrates, resulting in the formyl group of heme A. Iron-sulfur protein that transfers electrons in a wide variety of metabolic reactions. Involved in heme A biosynthesis and in iron-sulfur cluster assembly. Transfers electrons from adrenodoxin reductase arh1 to heme A synthase etp1(cd), a heme protein that catalyzes the conversion of heme O to heme A. Required for the de novo synthesis of Fe-S clusters on iron sulfur cluster assembly protein isu1. Interact in its reduced state with isu1 to productively deliver electrons for Fe-S cluster synthesis. Essential for coenzyme Q biosynthesis. May transfer the electrons required for the hydroxylation reaction performed by coq6. The sequence is that of Heme A synthase-mitochondrial ferredoxin fusion protein from Schizosaccharomyces pombe (strain 972 / ATCC 24843) (Fission yeast).